Here is a 472-residue protein sequence, read N- to C-terminus: L-fuculokinase (472 aa).

The protein belongs to the FGGY kinase family. It depends on a divalent metal cation as a cofactor.

The enzyme catalyses L-fuculose + ATP = L-fuculose 1-phosphate + ADP + H(+). It participates in carbohydrate degradation; L-fucose degradation; L-lactaldehyde and glycerone phosphate from L-fucose: step 2/3. In terms of biological role, catalyzes the phosphorylation of L-fuculose. The protein is L-fuculokinase of Salmonella typhi.